The following is a 275-amino-acid chain: MTLQQQIIKALGAKPQINAEEEIRRSVDFLKSYLQTYPFIKSLVLGISGGQDSTLAGKLCQMAINELRQETGNESLQFIAVRLPYGVQADEQDCQDAIAFIQPDRVLTVNIKGAVLASEQALREAGIELSDFVRGNEKARERMKAQYSIAGMTSGVVVGTDHAAEAITGFFTKYGDGGTDINPLYRLNKRQGKQLLAALGCPEHLYKKAPTADLEDDRPSLPDEVALGVTYDNIDDYLEGKNLPEQVARTIENWYLKTEHKRRPPITVFDDFWKK.

46 to 53 (GISGGQDS) is a binding site for ATP. Asp-52 contacts Mg(2+). Residue Arg-140 participates in deamido-NAD(+) binding. Thr-160 is a binding site for ATP. A Mg(2+)-binding site is contributed by Glu-165. Deamido-NAD(+)-binding residues include Lys-173 and Asp-180. ATP-binding residues include Lys-189 and Thr-211. 260–261 (HK) is a binding site for deamido-NAD(+).

Belongs to the NAD synthetase family. In terms of assembly, homodimer.

It catalyses the reaction deamido-NAD(+) + NH4(+) + ATP = AMP + diphosphate + NAD(+) + H(+). The protein operates within cofactor biosynthesis; NAD(+) biosynthesis; NAD(+) from deamido-NAD(+) (ammonia route): step 1/1. In terms of biological role, catalyzes the ATP-dependent amidation of deamido-NAD to form NAD. Uses ammonia as a nitrogen source. The protein is NH(3)-dependent NAD(+) synthetase of Escherichia coli O17:K52:H18 (strain UMN026 / ExPEC).